The primary structure comprises 890 residues: Phosphotransferase RcsD (890 aa).

Residues 1 to 21 lie on the Cytoplasmic side of the membrane; that stretch reads MRQKETTATTRFSLLPGSITR. The chain crosses the membrane as a helical span at residues 22 to 42; sequence FFLLLIIVLLVTMGVMVQSAV. At 43-308 the chain is on the periplasmic side; that stretch reads NAWLKDKSYQ…GTLLLDTLQN (266 aa). Residues 309-329 form a helical membrane-spanning segment; it reads ILLPLLLNIGLLALALFGYTT. At 330–890 the chain is on the cytoplasmic side; the sequence is FRHFSSRSTE…DIDSYVKSLL (561 aa). A histidine-like kinase region spans residues 468-678; it reads NIGDALKEPA…RYSVHIKMLA (211 aa). The HPt domain maps to 803–890; the sequence is AQLHASGYYA…DIDSYVKSLL (88 aa). Position 842 is a phosphohistidine (His842).

Belongs to the RcsD family. In terms of assembly, interacts with RcsC and RcsB. Has a higher affinity for RcsB than for RcsC. In terms of processing, phosphorylated by RcsC.

Its subcellular location is the cell inner membrane. Functionally, component of the Rcs signaling system, which controls transcription of numerous genes. RcsD is a phosphotransfer intermediate between the sensor kinase RcsC and the response regulator RcsB. It acquires a phosphoryl group from RcsC and transfers it to RcsB. The system controls expression of genes involved in colanic acid capsule synthesis, biofilm formation and cell division. The protein is Phosphotransferase RcsD of Escherichia coli (strain K12).